Here is a 336-residue protein sequence, read N- to C-terminus: tRNA(Ile)-lysidine synthase (336 aa).

21 to 26 is an ATP binding site; sequence SGGLDS.

This sequence belongs to the tRNA(Ile)-lysidine synthase family.

The protein resides in the cytoplasm. It carries out the reaction cytidine(34) in tRNA(Ile2) + L-lysine + ATP = lysidine(34) in tRNA(Ile2) + AMP + diphosphate + H(+). Ligates lysine onto the cytidine present at position 34 of the AUA codon-specific tRNA(Ile) that contains the anticodon CAU, in an ATP-dependent manner. Cytidine is converted to lysidine, thus changing the amino acid specificity of the tRNA from methionine to isoleucine. The polypeptide is tRNA(Ile)-lysidine synthase (Helicobacter pylori (strain ATCC 700392 / 26695) (Campylobacter pylori)).